Here is a 1347-residue protein sequence, read N- to C-terminus: Ubinuclein-2 (1347 aa).

The segment at 1–134 is disordered; the sequence is MAEPRRVAFI…ETVRLELVLK (134 aa). The residue at position 13 (Ser-13) is a Phosphoserine. Composition is skewed to basic and acidic residues over residues 16–37 and 67–79; these read RRRE…EPPR and SREK…EVSR. The span at 93-110 shows a compositional bias: pro residues; that stretch reads PEPPPPFPPLPLQPPPPR. Positions 122–134 are enriched in basic and acidic residues; that stretch reads PPRETVRLELVLK. Phosphothreonine is present on Thr-243. A Phosphoserine modification is found at Ser-250. Residues 250–301 form a disordered region; the sequence is SDTEEDDITDNQKHKPPKVPKIKEDDIEMKKRKRKEEGEKEKKPRKKVPKQL. Thr-252 bears the Phosphothreonine mark. A Glycyl lysine isopeptide (Lys-Gly) (interchain with G-Cter in SUMO2) cross-link involves residue Lys-272. A phosphoserine mark is found at Ser-311, Ser-416, Ser-419, Ser-422, and Ser-584. 6 disordered regions span residues 573-597, 707-740, 815-849, 880-913, 981-1006, and 1035-1218; these read LQTD…KRVI, ECSP…AAAS, LATP…DLAH, GLQR…HALG, RLPL…TVPS, and ASPK…SSVV. Over residues 574 to 584 the composition is skewed to basic and acidic residues; that stretch reads QTDEEREKNGS. Residues 721–740 are compositionally biased toward low complexity; that stretch reads VASVSGPPTSSSTAAIAAAS. A compositionally biased stretch (polar residues) spans 823 to 832; sequence STQTTHSSSL. Residues 880-911 show a composition bias toward low complexity; that stretch reads GLQRSSQIHTSSSSQTHVSSSSQAQIAASSHA. The span at 985–996 shows a compositional bias: polar residues; it reads STPSPGNGSQGS. The segment covering 1035–1045 has biased composition (low complexity); sequence ASPKLAASPKP. The segment covering 1046-1060 has biased composition (pro residues); that stretch reads ATSPKPLPSPKPSAS. Low complexity-rich tracts occupy residues 1061-1070 and 1077-1095; these read PKPSLSAKPS and SKSN…SSPN. Lys-1068 carries the post-translational modification N6-acetyllysine. Composition is skewed to polar residues over residues 1101–1164 and 1174–1185; these read GSHS…NSLS and RGSNLNSSGANR. A Phosphoserine modification is found at Ser-1123. Residue Lys-1148 is modified to N6-acetyllysine.

Belongs to the ubinuclein family. In terms of tissue distribution, expressed in several cell lines tested, including primary and transformed cell lines.

The chain is Ubinuclein-2 (UBN2) from Homo sapiens (Human).